The chain runs to 388 residues: 4-hydroxy-tetrahydrodipicolinate synthase 1, chloroplastic (388 aa).

The disordered stretch occupies residues methionine 1–alanine 51. A chloroplast-targeting transit peptide spans methionine 1 to alanine 62. Threonine 131 is a binding site for pyruvate. Residue tyrosine 217 is the Proton donor/acceptor of the active site. Residue lysine 245 is the Schiff-base intermediate with substrate of the active site. Isoleucine 284 is a pyruvate binding site.

This sequence belongs to the DapA family. In terms of assembly, tetramer of modified subunits derived from two genes in different combinations.

The protein localises to the plastid. It localises to the chloroplast. The catalysed reaction is L-aspartate 4-semialdehyde + pyruvate = (2S,4S)-4-hydroxy-2,3,4,5-tetrahydrodipicolinate + H2O + H(+). The protein operates within amino-acid biosynthesis; L-lysine biosynthesis via DAP pathway; (S)-tetrahydrodipicolinate from L-aspartate: step 3/4. Sensitive to lysine inhibition. This inhibition increase in an allosteric manner with increasing concentration of the inhibitor. Catalyzes the condensation of (S)-aspartate-beta-semialdehyde [(S)-ASA] and pyruvate to 4-hydroxy-tetrahydrodipicolinate (HTPA). In Triticum aestivum (Wheat), this protein is 4-hydroxy-tetrahydrodipicolinate synthase 1, chloroplastic.